Consider the following 592-residue polypeptide: Guanylate-binding protein 1 (592 aa).

A GTPase domain (Globular) region spans residues 1–311 (MASEIHMTGP…NAISSGDLPC (311 aa)). Residues 35 to 278 (TQPMVVVAIV…FCSYIFSNSK (244 aa)) enclose the GB1/RHD3-type G domain. GTP contacts are provided by residues 45–52 (GLYRTGKS), 67–69 (LGS), and 97–101 (DTEGL). A Phosphoserine modification is found at S156. A Cysteine methyl ester modification is found at C589. Residue C589 is the site of S-farnesyl cysteine attachment. Residue T590 is modified to Phosphothreonine. Positions 590 to 592 (TIS) are cleaved as a propeptide — removed in mature form.

It belongs to the TRAFAC class dynamin-like GTPase superfamily. GB1/RHD3 GTPase family. GB1 subfamily. As to quaternary structure, homodimer; homodimerization occurs upon GTP-binding and is required for the second hydrolysis step from GDP to GMP. Undergoes conformational changes and oligomerization upon GTP-binding and hydrolysis. Heterodimer with other family members, including GBP2, GBP3, GBP4 and GBP5. Dimerization regulates subcellular location to membranous structures. Interacts with SQSTM1. Interacts (when phosphorylated) with 14-3-3 protein sigma (SFN); leading to GBP1 retention in the cytosol and inactivation. Isoprenylation is required for proper subcellular location. In terms of processing, phosphorylated at Ser-156 by PIM1 in absence of infection, inhibits GBP1: phosphorylation promotes interaction with 14-3-3 protein sigma (SFN), leading to GBP1 retention in the cytosol. Dephosphorylated in response to infection, liberating GBP1.

Its subcellular location is the cytoplasmic vesicle membrane. The protein localises to the golgi apparatus membrane. It localises to the cell membrane. The protein resides in the cytoplasm. It is found in the cytosol. Its subcellular location is the secreted. It carries out the reaction GTP + H2O = GDP + phosphate + H(+). It catalyses the reaction GDP + H2O = GMP + phosphate + H(+). Its function is as follows. Interferon (IFN)-inducible GTPase that plays important roles in innate immunity against a diverse range of bacterial, viral and protozoan pathogens. Hydrolyzes GTP to GMP in two consecutive cleavage reactions: GTP is first hydrolyzed to GDP and then to GMP in a processive manner. Following infection, recruited to the pathogen-containing vacuoles or vacuole-escaped bacteria and promotes both inflammasome assembly and autophagy. Acts as a positive regulator of inflammasome assembly by facilitating the detection of inflammasome ligands from pathogens. Involved in the lysis of pathogen-containing vacuoles, releasing pathogens into the cytosol. Following pathogen release in the cytosol, forms a protein coat in a GTPase-dependent manner that encapsulates pathogens and promotes the detection of ligands by pattern recognition receptors. Plays a key role in inflammasome assembly in response to infection by Gram-negative bacteria: following pathogen release in the cytosol, forms a protein coat that encapsulates Gram-negative bacteria and directly binds to lipopolysaccharide (LPS), disrupting the O-antigen barrier and unmasking lipid A that is that detected by the non-canonical inflammasome effector CASP4/CASP11. Also promotes recruitment of proteins that mediate bacterial cytolysis, leading to release double-stranded DNA (dsDNA) that activates the AIM2 inflammasome. Involved in autophagy by regulating bacteriolytic peptide generation via its interaction with ubiquitin-binding protein SQSTM1, which delivers monoubiquitinated proteins to autolysosomes for the generation of bacteriolytic peptides. Confers protection to several pathogens, including the bacterial pathogens L.monocytogenes and M.bovis BCG as well as the protozoan pathogen T.gondii. Exhibits antiviral activity against influenza virus. This is Guanylate-binding protein 1 (GBP1) from Pongo abelii (Sumatran orangutan).